Here is a 451-residue protein sequence, read N- to C-terminus: Methylenetetrahydrofolate--tRNA-(uracil-5-)-methyltransferase TrmFO (451 aa).

An FAD-binding site is contributed by 9-14; the sequence is GGGMAG.

The protein belongs to the MnmG family. TrmFO subfamily. Requires FAD as cofactor.

It localises to the cytoplasm. It carries out the reaction uridine(54) in tRNA + (6R)-5,10-methylene-5,6,7,8-tetrahydrofolate + NADH + H(+) = 5-methyluridine(54) in tRNA + (6S)-5,6,7,8-tetrahydrofolate + NAD(+). The enzyme catalyses uridine(54) in tRNA + (6R)-5,10-methylene-5,6,7,8-tetrahydrofolate + NADPH + H(+) = 5-methyluridine(54) in tRNA + (6S)-5,6,7,8-tetrahydrofolate + NADP(+). Its function is as follows. Catalyzes the folate-dependent formation of 5-methyl-uridine at position 54 (M-5-U54) in all tRNAs. In Dinoroseobacter shibae (strain DSM 16493 / NCIMB 14021 / DFL 12), this protein is Methylenetetrahydrofolate--tRNA-(uracil-5-)-methyltransferase TrmFO.